The primary structure comprises 114 residues: Early 4 ORF4 protein (114 aa).

Residues 66–75 carry the Nuclear localization signal motif; that stretch reads RAKRRDRRRR.

This sequence belongs to the adenoviridae E4 ORF4 family. Interacts with host BAZ1A/ACF1, host PPP2R2A/PP2a-B55alpha subunit, and host PPP2R5E/PP2a-B'B56 subunit. May interact with host SRC. Post-translationally, may be phosphorylated by host SRC kinase.

It localises to the host nucleus. It is found in the host cytoplasm. Its function is as follows. Plays a role in viral alternative pre-mRNA splicing. Activates dephosphorylation by protein phosphatase 2A of host SR proteins and converts their splicing properties. When expressed alone ex vivo, induces p53/TP53-independent apoptosis called cytoplasmic death. May mimic nutrient/growth signals to activate the host mTOR pathway. The chain is Early 4 ORF4 protein from Homo sapiens (Human).